A 430-amino-acid polypeptide reads, in one-letter code: Protein translocase subunit SecY (430 aa).

10 helical membrane passes run 18–38, 68–88, 117–137, 147–167, 179–199, 217–237, 269–289, 308–328, 368–388, and 389–409; these read IFFTLAMLVIFKIGTYIPAPG, FSIFAMGIVPYITASIVMQLL, LAISLAFIQSIGMAFQFNNYL, IMSYLLIALVLTAGTAFLIWL, GISIIIFAGILSTLPASLIQF, VLGLLVSLILLTVGAIYVLEA, GVIPVIFAMAFFLLPRTLTLF, NVGMVVYIVLIILFTYFYAFV, FVGSIFLAVISILPILATKFM, and GLPQSIQIGGTSLLIVIGVAI.

Belongs to the SecY/SEC61-alpha family. In terms of assembly, component of the Sec protein translocase complex. Heterotrimer consisting of SecY, SecE and SecG subunits. The heterotrimers can form oligomers, although 1 heterotrimer is thought to be able to translocate proteins. Interacts with the ribosome. Interacts with SecDF, and other proteins may be involved. Interacts with SecA.

The protein localises to the cell membrane. In terms of biological role, the central subunit of the protein translocation channel SecYEG. Consists of two halves formed by TMs 1-5 and 6-10. These two domains form a lateral gate at the front which open onto the bilayer between TMs 2 and 7, and are clamped together by SecE at the back. The channel is closed by both a pore ring composed of hydrophobic SecY resides and a short helix (helix 2A) on the extracellular side of the membrane which forms a plug. The plug probably moves laterally to allow the channel to open. The ring and the pore may move independently. The protein is Protein translocase subunit SecY of Staphylococcus aureus (strain NCTC 8325 / PS 47).